A 545-amino-acid polypeptide reads, in one-letter code: T-complex protein 1 subunit gamma (545 aa).

At M1 the chain carries N-acetylmethionine. Residues 1 to 24 (MMGHRPVLVLSQNTKRESGRKVQS) are disordered. S11 bears the Phosphoserine mark. A Glycyl lysine isopeptide (Lys-Gly) (interchain with G-Cter in SUMO2) cross-link involves residue K15. G42 serves as a coordination point for ADP. Residue G42 participates in ATP binding. Residue D93 coordinates Mg(2+). Residues G94, T95, T96, S97, T162, and K163 each contribute to the ADP site. ATP is bound by residues G94, T95, and T96. S170 is modified (phosphoserine). K222 is subject to N6-acetyllysine. A phosphoserine mark is found at S243 and S244. At Y247 the chain carries Phosphotyrosine. Glycyl lysine isopeptide (Lys-Gly) (interchain with G-Cter in SUMO2) cross-links involve residues K248 and K249. S252 is modified (phosphoserine). Residues C366 and C372 are joined by a disulfide bond. K381 participates in a covalent cross-link: Glycyl lysine isopeptide (Lys-Gly) (interchain with G-Cter in SUMO2). Residue G411 participates in ADP binding. G411 provides a ligand contact to ATP. Residues T430 and T459 each carry the phosphothreonine modification. 4 residues coordinate ADP: G482, E483, E497, and K502. G482 provides a ligand contact to ATP. E497 lines the ATP pocket. The segment at 526–545 (HKKKGDDQSRQGGAPDAGQE) is disordered.

This sequence belongs to the TCP-1 chaperonin family. As to quaternary structure, component of the chaperonin-containing T-complex (TRiC), a hexadecamer composed of two identical back-to-back stacked rings enclosing a protein folding chamber. Each ring is made up of eight different subunits: TCP1/CCT1, CCT2, CCT3, CCT4, CCT5, CCT6A/CCT6, CCT7, CCT8. Interacts with PACRG. Interacts with DNAAF4. Interacts with DLEC1.

It is found in the cytoplasm. The enzyme catalyses ATP + H2O = ADP + phosphate + H(+). Component of the chaperonin-containing T-complex (TRiC), a molecular chaperone complex that assists the folding of actin, tubulin and other proteins upon ATP hydrolysis. The TRiC complex mediates the folding of WRAP53/TCAB1, thereby regulating telomere maintenance. As part of the TRiC complex may play a role in the assembly of BBSome, a complex involved in ciliogenesis regulating transports vesicles to the cilia. In Homo sapiens (Human), this protein is T-complex protein 1 subunit gamma (CCT3).